The sequence spans 1247 residues: Clustered mitochondria protein homolog (1247 aa).

The tract at residues 1–43 (MTLGSETKTDVEVPIINGKHEIPQEENDSGHSSINTPDSSEPD) is disordered. The span at 30–39 (GHSSINTPDS) shows a compositional bias: polar residues. The Clu domain occupies 329-579 (SDSLRAIELT…RSMPPDVHYL (251 aa)). Positions 1222 to 1247 (GKQQNGTTEESKTTDVAAQLDNETLD) are disordered.

Belongs to the CLU family.

The protein localises to the cytoplasm. Its function is as follows. mRNA-binding protein involved in proper cytoplasmic distribution of mitochondria. The polypeptide is Clustered mitochondria protein homolog (Caenorhabditis elegans).